The chain runs to 1563 residues: Pentafunctional AROM polypeptide (1563 aa).

The segment at 1–382 (MAESSSNPTR…YEPKASVVED (382 aa)) is 3-dehydroquinate synthase. Residues 48–50 (DTN), 82–85 (EYSK), 113–115 (GGV), and Asp118 contribute to the NAD(+) site. A 7-phospho-2-dehydro-3-deoxy-D-arabino-heptonate-binding site is contributed by Arg129. 138–139 (TT) contributes to the NAD(+) binding site. Residues Asp145 and Lys151 each contribute to the 7-phospho-2-dehydro-3-deoxy-D-arabino-heptonate site. Lys160 is a binding site for NAD(+). Residue Asn161 coordinates 7-phospho-2-dehydro-3-deoxy-D-arabino-heptonate. Residues 178–181 (FLNT) and Asn189 each bind NAD(+). Residue Glu193 participates in Zn(2+) binding. Residues 193-196 (EVIK) and Lys248 contribute to the 7-phospho-2-dehydro-3-deoxy-D-arabino-heptonate site. The Proton acceptor; for 3-dehydroquinate synthase activity role is filled by Glu258. Residues 262–266 (RNLLN) and His269 contribute to the 7-phospho-2-dehydro-3-deoxy-D-arabino-heptonate site. His269 contacts Zn(2+). Residue His273 is the Proton acceptor; for 3-dehydroquinate synthase activity of the active site. The 7-phospho-2-dehydro-3-deoxy-D-arabino-heptonate site is built by His285 and Lys354. Residue His285 coordinates Zn(2+). Residues 395-834 (VHAGVPKDLK…WDTMSNYFKS (440 aa)) form an EPSP synthase region. Cys816 (for EPSP synthase activity) is an active-site residue. Residues 836–850 (LEGEEEPHSSHVSHE) are compositionally biased toward basic and acidic residues. A disordered region spans residues 836–857 (LEGEEEPHSSHVSHEKPRKGNP). Residues 857–1051 (PKSIFIIGMR…KKKPQSSFVS (195 aa)) are shikimate kinase. 864–871 (GMRGAGKS) is a binding site for ATP. A 3-dehydroquinase region spans residues 1052-1265 (LTVPNVSKAL…AAPGQLSAAE (214 aa)). Catalysis depends on His1168, which acts as the Proton acceptor; for 3-dehydroquinate dehydratase activity. Lys1196 acts as the Schiff-base intermediate with substrate; for 3-dehydroquinate dehydratase activity in catalysis. Residues 1278 to 1563 (PRSFYLFGKP…TDAQAAVMGN (286 aa)) are shikimate dehydrogenase.

This sequence in the N-terminal section; belongs to the sugar phosphate cyclases superfamily. Dehydroquinate synthase family. In the 2nd section; belongs to the EPSP synthase family. It in the 3rd section; belongs to the shikimate kinase family. The protein in the 4th section; belongs to the type-I 3-dehydroquinase family. This sequence in the C-terminal section; belongs to the shikimate dehydrogenase family. As to quaternary structure, homodimer. The cofactor is Zn(2+).

The protein resides in the cytoplasm. The catalysed reaction is 7-phospho-2-dehydro-3-deoxy-D-arabino-heptonate = 3-dehydroquinate + phosphate. It carries out the reaction 3-dehydroquinate = 3-dehydroshikimate + H2O. The enzyme catalyses shikimate + NADP(+) = 3-dehydroshikimate + NADPH + H(+). It catalyses the reaction shikimate + ATP = 3-phosphoshikimate + ADP + H(+). The catalysed reaction is 3-phosphoshikimate + phosphoenolpyruvate = 5-O-(1-carboxyvinyl)-3-phosphoshikimate + phosphate. It functions in the pathway metabolic intermediate biosynthesis; chorismate biosynthesis; chorismate from D-erythrose 4-phosphate and phosphoenolpyruvate: step 2/7. The protein operates within metabolic intermediate biosynthesis; chorismate biosynthesis; chorismate from D-erythrose 4-phosphate and phosphoenolpyruvate: step 3/7. Its pathway is metabolic intermediate biosynthesis; chorismate biosynthesis; chorismate from D-erythrose 4-phosphate and phosphoenolpyruvate: step 4/7. It participates in metabolic intermediate biosynthesis; chorismate biosynthesis; chorismate from D-erythrose 4-phosphate and phosphoenolpyruvate: step 5/7. It functions in the pathway metabolic intermediate biosynthesis; chorismate biosynthesis; chorismate from D-erythrose 4-phosphate and phosphoenolpyruvate: step 6/7. Functionally, the AROM polypeptide catalyzes 5 consecutive enzymatic reactions in prechorismate polyaromatic amino acid biosynthesis. In Sordaria macrospora (strain ATCC MYA-333 / DSM 997 / K(L3346) / K-hell), this protein is Pentafunctional AROM polypeptide.